A 773-amino-acid chain; its full sequence is Probable dipeptidyl peptidase 4 (773 aa).

Positions 1–18 (MKLSVLSVLLVSVAQAAA) are cleaved as a signal peptide. Asn-37, Asn-80, Asn-112, Asn-220, Asn-471, and Asn-496 each carry an N-linked (GlcNAc...) asparagine glycan. Ser-619 functions as the Charge relay system in the catalytic mechanism. The N-linked (GlcNAc...) asparagine glycan is linked to Asn-671. Active-site charge relay system residues include Asp-696 and His-731.

This sequence belongs to the peptidase S9B family.

The protein resides in the secreted. The enzyme catalyses Release of an N-terminal dipeptide, Xaa-Yaa-|-Zaa-, from a polypeptide, preferentially when Yaa is Pro, provided Zaa is neither Pro nor hydroxyproline.. In terms of biological role, extracellular dipeptidyl-peptidase which removes N-terminal dipeptides sequentially from polypeptides having unsubstituted N-termini provided that the penultimate residue is proline. This chain is Probable dipeptidyl peptidase 4 (dpp4), found in Emericella nidulans (strain FGSC A4 / ATCC 38163 / CBS 112.46 / NRRL 194 / M139) (Aspergillus nidulans).